A 372-amino-acid chain; its full sequence is Alanine dehydrogenase 2 (372 aa).

The active site involves histidine 95. 169–199 (KVTIIGGGQAGTNAAKIALGLGADVTILDVN) contributes to the NAD(+) binding site.

The protein belongs to the AlaDH/PNT family.

The catalysed reaction is L-alanine + NAD(+) + H2O = pyruvate + NH4(+) + NADH + H(+). The protein operates within amino-acid degradation; L-alanine degradation via dehydrogenase pathway; NH(3) and pyruvate from L-alanine: step 1/1. Functionally, may play a role in cell wall synthesis as L-alanine is an important constituent of the peptidoglycan layer. This Staphylococcus aureus (strain N315) protein is Alanine dehydrogenase 2 (ald2).